Reading from the N-terminus, the 427-residue chain is Mitochondrial distribution and morphology protein 10 (427 aa).

Residues 393–414 show a composition bias toward low complexity; sequence SSYANSQATAGAQGSSGGPPTS. Residues 393-427 are disordered; that stretch reads SSYANSQATAGAQGSSGGPPTSYWRGVGVSVSYSS.

This sequence belongs to the MDM10 family. As to quaternary structure, component of the ER-mitochondria encounter structure (ERMES) or MDM complex, composed of mmm1, mdm10, mdm12 and mdm34. Associates with the mitochondrial outer membrane sorting assembly machinery SAM(core) complex.

It localises to the mitochondrion outer membrane. Functionally, component of the ERMES/MDM complex, which serves as a molecular tether to connect the endoplasmic reticulum and mitochondria. Components of this complex are involved in the control of mitochondrial shape and protein biogenesis and may function in phospholipid exchange. mdm10 is involved in the late assembly steps of the general translocase of the mitochondrial outer membrane (TOM complex). Functions in the tom40-specific route of the assembly of outer membrane beta-barrel proteins, including the association of tom40 with the receptor tom22 and small TOM proteins. Can associate with the SAM(core) complex as well as the mdm12-mmm1 complex, both involved in late steps of the major beta-barrel assembly pathway, that is responsible for biogenesis of all outer membrane beta-barrel proteins. May act as a switch that shuttles between both complexes and channels precursor proteins into the tom40-specific pathway. Plays a role in mitochondrial morphology and in the inheritance of mitochondria. This Emericella nidulans (strain FGSC A4 / ATCC 38163 / CBS 112.46 / NRRL 194 / M139) (Aspergillus nidulans) protein is Mitochondrial distribution and morphology protein 10 (mdmB).